The primary structure comprises 206 residues: Probable N-acetyltransferase 14 (206 aa).

The 201-residue stretch at 6–206 folds into the N-acetyltransferase domain; sequence LSVREMREDE…MLVREFSKDL (201 aa). The helical transmembrane segment at 57 to 77 threads the bilayer; the sequence is FILASFALALLLPVFLAVAAV.

Belongs to the camello family.

Its subcellular location is the membrane. Its function is as follows. Probable acetyltransferase that binds the 5'-GGACTACAG-3' sequence of coproporphyrinogen oxidase promoter. Able to activate transcription of a reporter construct in vitro. In terms of biological role, probable acetyltransferase. May act as a transcription factor regulating the expression of coproporphyrinogen oxidase by binding to a promoter regulatory element. The sequence is that of Probable N-acetyltransferase 14 (Nat14) from Mus musculus (Mouse).